The following is a 265-amino-acid chain: Small ribosomal subunit protein uS2 (265 aa).

Positions 231–265 (VEEEYEDYEGSEEDYDYDETEYADSVIPEDGEEAE) are disordered.

It belongs to the universal ribosomal protein uS2 family.

The polypeptide is Small ribosomal subunit protein uS2 (Nostoc sp. (strain PCC 7120 / SAG 25.82 / UTEX 2576)).